The chain runs to 301 residues: Phosphatidylglycerol--prolipoprotein diacylglyceryl transferase (301 aa).

4 helical membrane passes run 10 to 30, 57 to 77, 92 to 112, and 119 to 139; these read IAFS…LAGF, LLFY…MLFY, VWEG…AVAW, and MHMF…LGFG. Residue Arg140 participates in a 1,2-diacyl-sn-glycero-3-phospho-(1'-sn-glycerol) binding. A run of 3 helical transmembrane segments spans residues 202–222, 230–250, and 264–284; these read PSQL…LWLF, YAVS…VEFV, and LTRG…LFWL.

This sequence belongs to the Lgt family.

The protein resides in the cell inner membrane. It catalyses the reaction L-cysteinyl-[prolipoprotein] + a 1,2-diacyl-sn-glycero-3-phospho-(1'-sn-glycerol) = an S-1,2-diacyl-sn-glyceryl-L-cysteinyl-[prolipoprotein] + sn-glycerol 1-phosphate + H(+). It participates in protein modification; lipoprotein biosynthesis (diacylglyceryl transfer). Its function is as follows. Catalyzes the transfer of the diacylglyceryl group from phosphatidylglycerol to the sulfhydryl group of the N-terminal cysteine of a prolipoprotein, the first step in the formation of mature lipoproteins. The sequence is that of Phosphatidylglycerol--prolipoprotein diacylglyceryl transferase from Xylella fastidiosa (strain M23).